The chain runs to 221 residues: Uracil-DNA glycosylase 1 (221 aa).

D61 serves as the catalytic Proton acceptor.

The protein belongs to the uracil-DNA glycosylase (UDG) superfamily. UNG family.

It is found in the cytoplasm. It carries out the reaction Hydrolyzes single-stranded DNA or mismatched double-stranded DNA and polynucleotides, releasing free uracil.. Excises uracil residues from the DNA which can arise as a result of misincorporation of dUMP residues by DNA polymerase or due to deamination of cytosine. This chain is Uracil-DNA glycosylase 1, found in Listeria monocytogenes serovar 1/2a (strain ATCC BAA-679 / EGD-e).